A 100-amino-acid chain; its full sequence is Urease subunit gamma (100 aa).

Belongs to the urease gamma subunit family. In terms of assembly, heterotrimer of UreA (gamma), UreB (beta) and UreC (alpha) subunits. Three heterotrimers associate to form the active enzyme.

It is found in the cytoplasm. It catalyses the reaction urea + 2 H2O + H(+) = hydrogencarbonate + 2 NH4(+). It participates in nitrogen metabolism; urea degradation; CO(2) and NH(3) from urea (urease route): step 1/1. In Aliivibrio fischeri (strain ATCC 700601 / ES114) (Vibrio fischeri), this protein is Urease subunit gamma.